Here is a 319-residue protein sequence, read N- to C-terminus: 12-(S)-hydroxy-5,8,10,14-eicosatetraenoic acid receptor (319 aa).

Topologically, residues 1-16 (MPFPNCSAPSTVVATA) are extracellular. N-linked (GlcNAc...) asparagine glycosylation is present at Asn-5. A helical membrane pass occupies residues 17–37 (VGVLLGLECGLGLLGNAVALW). The Cytoplasmic segment spans residues 38 to 52 (TFLFRVRVWKPYAVY). Residues 53-73 (LLNLALADLLLAACLPFLAAF) traverse the membrane as a helical segment. Residues 74 to 91 (YLSLQAWHLGRVGCWALH) lie on the Extracellular side of the membrane. Residues 92-110 (FLLDLSRSVGMAFLAAVAL) form a helical membrane-spanning segment. Topologically, residues 111 to 131 (DRYLRVVHPRLKVNLLSPQAA) are cytoplasmic. A helical membrane pass occupies residues 132–152 (LGVSGLVWLLMVALTCPGLLI). The Extracellular segment spans residues 153–180 (SEAAQNSTRCHSFYSRADGSFSIIWQEA). A helical transmembrane segment spans residues 181–201 (LSCLQFVLPFGLIVFCNAGII). Topologically, residues 202–219 (RALQKRLREPEKQPKLQR) are cytoplasmic. A helical transmembrane segment spans residues 220 to 240 (AQALVTLVVVLFALCFLPCFL). Residues 241–265 (ARVLMHIFQNLGSCRALCAVAHTSD) lie on the Extracellular side of the membrane. Residues 266–284 (VTGSLTYLHSVLNPVVYCF) form a helical membrane-spanning segment. Residues 285 to 319 (SSPTFRSSYRRVFHTLRGKGQAAEPPDFNPRDSYS) lie on the Cytoplasmic side of the membrane.

Belongs to the G-protein coupled receptor 1 family. As to quaternary structure, interacts with KRAS; in a farnesylation-dependent manner.

The protein localises to the cell membrane. In terms of biological role, high-affinity receptor for 12-(S)-hydroxy-5,8,10,14-eicosatetraenoic acid (12-S-HETE), with much lower affinities for other HETE isomers. 12-S-HETE is a eicosanoid, a 12-lipoxygenase (ALOX12) metabolite of arachidonic acid, involved in many physiologic and pathologic processes. 12-S-HETE-binding leads to activation of ERK1/2 (MAPK3/MAPK1), MEK, and NF-kappa-B pathways leading to cell growth. Plays a crucial role for proliferation, survival and macropinocytosis of KRAS-dependent cancer cells by mediating the translocation of KRAS from the endoplasmic reticulum to the plasma membrane (PM) and its association with the PM. Contributes to enhanced immune responses by inducing dendrite protrusion of small intestinal CX3CR1(+) phagocytes for the uptake of luminal antigens. Acts also as a key receptor for 12-(S)-HETE-mediated liver ischemia reperfusion injury. Functionally, proton-sensing G protein-coupled receptor. This is 12-(S)-hydroxy-5,8,10,14-eicosatetraenoic acid receptor (GPR31) from Homo sapiens (Human).